The chain runs to 57 residues: uncharacterized protein (57 aa).

This is an uncharacterized protein from Haemophilus influenzae (strain ATCC 51907 / DSM 11121 / KW20 / Rd).